Reading from the N-terminus, the 1267-residue chain is Probable ATP-dependent RNA helicase DHR1 (1267 aa).

Disordered regions lie at residues 1–67 (MGTY…EPLT), 168–233 (YEPK…SNIK), and 255–313 (EELK…DQND). Basic and acidic residues-rich tracts occupy residues 7–25 (RFNEKARSGHMAKLKELKR) and 32–43 (TRQDENDERVEN). The span at 175–192 (EYGEGGSSEDDDGEDDFE) shows a compositional bias: acidic residues. A Phosphoserine modification is found at Ser181. The segment covering 202–217 (TDNEEKKSSGFIDHRP) has biased composition (basic and acidic residues). The segment covering 264 to 284 (DEMDFDTTSEDDDEEEDQEEE) has biased composition (acidic residues). A Helicase ATP-binding domain is found at 401 to 580 (MEAIHHNDVV…KTLFPIAPPV (180 aa)). 414–421 (GETGSGKT) serves as a coordination point for ATP. Residues 516 to 519 (DEAH) carry the DEAH box motif. The 184-residue stretch at 675-858 (DIDFSVQVID…SIVLQMKSMA (184 aa)) folds into the Helicase C-terminal domain. 2 disordered regions span residues 693–720 (RYEEDEGNSGNGEDEEDEEEEGFEEVLT) and 955–976 (PNPDENLDDKIREHDESTPGMD). Over residues 695-719 (EEDEGNSGNGEDEEDEEEEGFEEVL) the composition is skewed to acidic residues.

The protein belongs to the DEAD box helicase family. DEAH subfamily. As to quaternary structure, interacts with snoRNA U3. Component of the ribosomal small subunit (SSU) processome composed of at least 40 protein subunits and snoRNA U3.

It is found in the nucleus. Its subcellular location is the nucleolus. The catalysed reaction is ATP + H2O = ADP + phosphate + H(+). Its function is as follows. Probable ATP-binding RNA helicase. Required for 18S rRNA synthesis. May play a role in restructuring of the pre-rRNA. In Saccharomyces cerevisiae (strain ATCC 204508 / S288c) (Baker's yeast), this protein is Probable ATP-dependent RNA helicase DHR1 (ECM16).